The primary structure comprises 132 residues: Small ribosomal subunit protein uS11 (132 aa).

It belongs to the universal ribosomal protein uS11 family. Part of the 30S ribosomal subunit. Interacts with proteins S7 and S18. Binds to IF-3.

Functionally, located on the platform of the 30S subunit, it bridges several disparate RNA helices of the 16S rRNA. Forms part of the Shine-Dalgarno cleft in the 70S ribosome. This chain is Small ribosomal subunit protein uS11, found in Clostridium botulinum (strain 657 / Type Ba4).